The following is a 327-amino-acid chain: Serine/threonine-protein phosphatase alpha-1 isoform (327 aa).

Mn(2+) is bound by residues Asp62, His64, Asp90, and Asn122. His123 acts as the Proton donor in catalysis. His171 and His246 together coordinate Mn(2+). The interval 308–327 (GSSGRPLTPPRGANNKNKKK) is disordered. The residue at position 315 (Thr315) is a Phosphothreonine.

It belongs to the PPP phosphatase family. PP-1 subfamily. As to quaternary structure, interacts with Nop17l. Requires Mn(2+) as cofactor.

It carries out the reaction O-phospho-L-seryl-[protein] + H2O = L-seryl-[protein] + phosphate. The enzyme catalyses O-phospho-L-threonyl-[protein] + H2O = L-threonyl-[protein] + phosphate. The chain is Serine/threonine-protein phosphatase alpha-1 isoform (Pp1alpha-96A) from Drosophila melanogaster (Fruit fly).